We begin with the raw amino-acid sequence, 269 residues long: Shikimate dehydrogenase (NADP(+)) (269 aa).

Shikimate contacts are provided by residues 14 to 16 (SKS) and Thr-61. Lys-65 functions as the Proton acceptor in the catalytic mechanism. Glu-77 is an NADP(+) binding site. Shikimate is bound by residues Asn-86 and Asp-102. NADP(+) contacts are provided by residues 126 to 130 (GAGGA), 150 to 155 (NRTYEK), and Met-213. Tyr-215 is a binding site for shikimate. An NADP(+)-binding site is contributed by Gly-237.

It belongs to the shikimate dehydrogenase family. In terms of assembly, homodimer.

The enzyme catalyses shikimate + NADP(+) = 3-dehydroshikimate + NADPH + H(+). It functions in the pathway metabolic intermediate biosynthesis; chorismate biosynthesis; chorismate from D-erythrose 4-phosphate and phosphoenolpyruvate: step 4/7. Involved in the biosynthesis of the chorismate, which leads to the biosynthesis of aromatic amino acids. Catalyzes the reversible NADPH linked reduction of 3-dehydroshikimate (DHSA) to yield shikimate (SA). In Aliivibrio fischeri (strain ATCC 700601 / ES114) (Vibrio fischeri), this protein is Shikimate dehydrogenase (NADP(+)).